Here is a 535-residue protein sequence, read N- to C-terminus: NEDD8-activating enzyme E1 regulatory subunit (535 aa).

An interaction with UBA3 region spans residues 332–345; that stretch reads DMIADSSKFIKLQN.

Belongs to the ubiquitin-activating E1 family. ULA1 subfamily. Heterodimer of UBA3 and NAE1. The complex binds NEDD8 and UBE2M.

Its pathway is protein modification; protein neddylation. In terms of biological role, regulatory subunit of the dimeric UBA3-NAE1 E1 enzyme. E1 activates NEDD8 by first adenylating its C-terminal glycine residue with ATP, thereafter linking this residue to the side chain of the catalytic cysteine, yielding a NEDD8-UBA3 thioester and free AMP. E1 finally transfers NEDD8 to the catalytic cysteine of UBE2M. The covalent attachment of NEDD8 to target proteins is known as 'neddylation' and the process is involved in the regulation of cell growth, viability and development. This chain is NEDD8-activating enzyme E1 regulatory subunit (NAE1), found in Gallus gallus (Chicken).